Reading from the N-terminus, the 325-residue chain is Capsid protein (325 aa).

A disordered region spans residues aspartate 30–alanine 89. The segment covering leucine 59 to proline 84 has biased composition (pro residues).

The protein belongs to the potexviruses coat protein family.

It localises to the virion. Its function is as follows. Required for genome encapsidation. Forms ribonucleoprotein complexes along with TGB1 helicase and viral RNA. This chain is Capsid protein, found in Citrus (ICRSV).